The chain runs to 243 residues: MYNVKLEVFEGPFDLLFHLIEKNEIDLMDIPISVILDQYMEYIKTLQEMDLNVASEFIVMAATLLEIKSKMLLPKQKFEGQQLEMEEVDPREELVTKLIEYKKYKIIAQTFKEMCKIGSRFFREEPEVKYIDKKIAFNYSSEDIYKAYLKVISKNNAKEDEIEIKKDEYTVESKIKELLVKLVKKTVLWFSEFIKKSRAKGEIIVSFIAVLELVRLNKIIAEQKTTYGDILIKSFGRGEKNEQ.

This sequence belongs to the ScpA family. Component of a cohesin-like complex composed of ScpA, ScpB and the Smc homodimer, in which ScpA and ScpB bind to the head domain of Smc. The presence of the three proteins is required for the association of the complex with DNA.

The protein localises to the cytoplasm. Participates in chromosomal partition during cell division. May act via the formation of a condensin-like complex containing Smc and ScpB that pull DNA away from mid-cell into both cell halves. The polypeptide is Segregation and condensation protein A (Thermoanaerobacter pseudethanolicus (strain ATCC 33223 / 39E) (Clostridium thermohydrosulfuricum)).